A 230-amino-acid polypeptide reads, in one-letter code: Aspartate and serine-rich protein (230 aa).

3 N-linked (GlcNAc...) asparagine glycosylation sites follow: asparagine 17, asparagine 132, and asparagine 139. The segment at 112–230 is disordered; it reads LNGGATAGGV…DSDSNDTDSD (119 aa). The span at 126 to 140 shows a compositional bias: acidic residues; it reads DTDESSNDTDEDSND. The segment covering 141–161 has biased composition (basic and acidic residues); the sequence is SDSKDTDSDSKDTDSDSKDSD. N-linked (GlcNAc...) asparagine glycosylation is found at asparagine 163 and asparagine 170. Residues 173-223 are compositionally biased toward basic and acidic residues; it reads DSKDTDSDSKDSDSKDTDSDSKDTDSDSKDSDSKDTDSDSKDTDSDSKDSD. Residue asparagine 225 is glycosylated (N-linked (GlcNAc...) asparagine).

As to expression, component of the acid-insoluble organic matrix of calcified layers of the shell (at protein level).

The protein resides in the secreted. The sequence is that of Aspartate and serine-rich protein from Lottia gigantea (Giant owl limpet).